We begin with the raw amino-acid sequence, 797 residues long: Adhesion G-protein coupled receptor G7 (797 aa).

An N-terminal signal peptide occupies residues 1-26 (MASCRAWNLRVLVAVVCGLLTGIILG). Residues 27 to 438 (LGIWRIVIRI…QYPKSLDILS (412 aa)) lie on the Extracellular side of the membrane. Residues asparagine 82, asparagine 159, asparagine 178, asparagine 191, asparagine 247, asparagine 261, asparagine 312, asparagine 316, and asparagine 387 are each glycosylated (N-linked (GlcNAc...) asparagine). In terms of domain architecture, GAIN-B spans 275–428 (FSVQKGASSS…AVLMTFKKDY (154 aa)). Intrachain disulfides connect cysteine 383–cysteine 410 and cysteine 398–cysteine 412. Residues 383–428 (CVYWNLSAKDWDTYGCQKDKGTDGFLRCRCNHTTNFAVLMTFKKDY) are GPS. N-linked (GlcNAc...) asparagine glycosylation is present at asparagine 413. The helical transmembrane segment at 439-459 (NVGCALSVTGLALTVIFQIVT) threads the bilayer. Over 460 to 468 (RKVRKTSVT) the chain is Cytoplasmic. A helical membrane pass occupies residues 469-489 (WVLVNLCISMLIFNLLFVFGI). Over 490-528 (ENSNKNLQTSDGDINNIDFDNNDIPRTDTINIPNPMCTA) the chain is Extracellular. The chain crosses the membrane as a helical span at residues 529–549 (IAALLHYFLLVTFTWNALSAA). At 550 to 565 (QLYYLLIRTMKPLPRH) the chain is on the cytoplasmic side. The helical transmembrane segment at 566 to 586 (FILFISLIGWGVPAIVVAITV) threads the bilayer. Residues 587-623 (GVIYSQNGNNPQWELDYRQEKICWLAIPEPNGVIKSP) lie on the Extracellular side of the membrane. The helical transmembrane segment at 624–644 (LLWSFIVPVTIILISNVVMFI) threads the bilayer. Topologically, residues 645–669 (TISIKVLWKNNQNLTSTKKVSSMKK) are cytoplasmic. A helical transmembrane segment spans residues 670-690 (IVSTLSVAVVFGITWILAYLM). The Extracellular portion of the chain corresponds to 691 to 698 (LVNDDSIR). Residues 699–719 (IVFSYIFCLFNTTQGLQIFIL) traverse the membrane as a helical segment. At 720–797 (YTVRTKVFQS…SESDNAKESI (78 aa)) the chain is on the cytoplasmic side.

It belongs to the G-protein coupled receptor 2 family. Adhesion G-protein coupled receptor (ADGR) subfamily.

It is found in the membrane. Orphan receptor. This chain is Adhesion G-protein coupled receptor G7 (ADGRG7), found in Homo sapiens (Human).